Consider the following 138-residue polypeptide: MAPK kinase substrate protein At1g80180 (138 aa).

The interval 52 to 138 is disordered; the sequence is TSEVQDQTTK…RKRPAKRRSR (87 aa). Residues 69-81 are compositionally biased toward basic and acidic residues; sequence KPIRTDGGMERSR. S98 is modified (phosphoserine). Phosphoserine; by MAPK6 is present on S105. Over residues 121–138 the composition is skewed to basic residues; the sequence is QPGKKVNQRKRPAKRRSR.

As to expression, expressed in developing cotyledons, mature cotyledons, cotyledon epidermis and stomata.

Functionally, may play a role in the regulation of stomata patterning. This chain is MAPK kinase substrate protein At1g80180, found in Arabidopsis thaliana (Mouse-ear cress).